The chain runs to 351 residues: MTIAVGRAPQRGWFDVLDDWLKRDRFVFVGWSGLLLFPTAYLALGGWFTGTTFVTSWYTHGIASSYLEGCNFLSAAVSTPADAMGHSLLLLWGPEAQGDFVRWCQLGGLWTFVALHGSFSLIGFMLRQFEIARLVGIRPYNALAFSGPVVVFLACFLIYPLGQHSWFFAPSFGVAAIFRFILFLQGFHNWTLNPFHMMGVAGILGGALLCGIHGATVQNTLFEDGAMSNTFKGFDPTQEEETYSMVTANRFWSQIFGIAFSNKRWLHFFMLFVPVMGMWTPSVGIVGLAVNLRAYDFVSQEVRAAEDPEFETFYTKNVLLNEGIRAWMSVADQPHENFVFPEEVMPRGNAL.

The chain crosses the membrane as a helical span at residues 39-59 (TAYLALGGWFTGTTFVTSWYT). Residue His116 participates in chlorophyll a binding. Residues 123 to 139 (GFMLRQFEIARLVGIRP) traverse the membrane as a helical segment. Pheophytin a is bound by residues Gln128 and Asn141. Residues 151–164 (VFLACFLIYPLGQH) traverse the membrane as a helical segment. His196 serves as a coordination point for chlorophyll a. A helical membrane pass occupies residues 206-226 (GALLCGIHGATVQNTLFEDGA). Positions 213 and 260 each coordinate a plastoquinone. His213 provides a ligand contact to Fe cation. Fe cation is bound at residue His267. A helical membrane pass occupies residues 277 to 293 (GMWTPSVGIVGLAVNLR).

The protein belongs to the reaction center PufL/M/PsbA/D family. PSII is composed of 1 copy each of membrane proteins PsbA, PsbB, PsbC, PsbD, PsbE, PsbF, PsbH, PsbI, PsbJ, PsbK, PsbL, PsbM, PsbT, PsbX, PsbY, Psb30/Ycf12, peripheral proteins PsbO, CyanoQ (PsbQ), PsbU, PsbV and a large number of cofactors. It forms dimeric complexes. The cofactor is The D1/D2 heterodimer binds P680, chlorophylls that are the primary electron donor of PSII, and subsequent electron acceptors. It shares a non-heme iron and each subunit binds pheophytin, quinone, additional chlorophylls, carotenoids and lipids. There is also a Cl(-1) ion associated with D1 and D2, which is required for oxygen evolution. The PSII complex binds additional chlorophylls, carotenoids and specific lipids..

The protein localises to the cellular thylakoid membrane. The catalysed reaction is 2 a plastoquinone + 4 hnu + 2 H2O = 2 a plastoquinol + O2. Functionally, photosystem II (PSII) is a light-driven water:plastoquinone oxidoreductase that uses light energy to abstract electrons from H(2)O, generating O(2) and a proton gradient subsequently used for ATP formation. It consists of a core antenna complex that captures photons, and an electron transfer chain that converts photonic excitation into a charge separation. The D1/D2 (PsbA/PsbD) reaction center heterodimer binds P680, the primary electron donor of PSII as well as several subsequent electron acceptors. D2 is needed for assembly of a stable PSII complex. This chain is Photosystem II D2 protein, found in Prochlorococcus marinus (strain MIT 9313).